The sequence spans 554 residues: Probable urocanate hydratase (554 aa).

NAD(+) contacts are provided by residues 49–50 (GG), Gln-127, Glu-194, 240–241 (NA), 261–265 (QTAAH), 271–272 (YI), and Tyr-320. Cys-408 is a catalytic residue. Residue Gly-490 coordinates NAD(+).

This sequence belongs to the urocanase family. It depends on NAD(+) as a cofactor.

The protein resides in the cytoplasm. It catalyses the reaction 4-imidazolone-5-propanoate = trans-urocanate + H2O. It functions in the pathway amino-acid degradation; L-histidine degradation into L-glutamate; N-formimidoyl-L-glutamate from L-histidine: step 2/3. In terms of biological role, catalyzes the conversion of urocanate to 4-imidazolone-5-propionate. In Thermoplasma acidophilum (strain ATCC 25905 / DSM 1728 / JCM 9062 / NBRC 15155 / AMRC-C165), this protein is Probable urocanate hydratase.